The sequence spans 515 residues: Protein NRT1/ PTR FAMILY 4.1 (515 aa).

12 helical membrane passes run 24–44 (GIKA…VFLA), 71–91 (FVGT…SFLT), 93–113 (FAAF…LTLQ), 134–154 (VLFT…GSLP), 168–188 (LISG…FLAV), 204–224 (FTIS…GCPM), 298–318 (FLAL…VAQM), 339–359 (IPVA…LALY), 381–401 (IGYG…VEVK), 413–433 (ISVF…MLTV), 461–481 (AMGF…TGWL), and 492–512 (LFYL…IFWA).

The protein belongs to the major facilitator superfamily. Proton-dependent oligopeptide transporter (POT/PTR) (TC 2.A.17) family. Expressed in siliques and flowers.

The protein resides in the membrane. Functionally, involved in (+) and (-)-abscisic acid transport (ABA) and in gibberellin import. This chain is Protein NRT1/ PTR FAMILY 4.1 (NPF4.1), found in Arabidopsis thaliana (Mouse-ear cress).